An 864-amino-acid chain; its full sequence is Leucine--tRNA ligase (864 aa).

Residues 42–52 (PYPSGKLHMGH) carry the 'HIGH' region motif. A 'KMSKS' region motif is present at residues 624-628 (KMSKS). Lysine 627 provides a ligand contact to ATP.

The protein belongs to the class-I aminoacyl-tRNA synthetase family.

The protein localises to the cytoplasm. It catalyses the reaction tRNA(Leu) + L-leucine + ATP = L-leucyl-tRNA(Leu) + AMP + diphosphate. This chain is Leucine--tRNA ligase, found in Burkholderia ambifaria (strain MC40-6).